The chain runs to 416 residues: Glutamyl-tRNA reductase 1 (416 aa).

Substrate is bound by residues 57-60 (TCNR), Ser-113, 118-120 (DFE), and Gln-124. Cys-58 (nucleophile) is an active-site residue. Residue 193-198 (GTGKIG) coordinates NADP(+).

Belongs to the glutamyl-tRNA reductase family. In terms of assembly, homodimer.

It catalyses the reaction (S)-4-amino-5-oxopentanoate + tRNA(Glu) + NADP(+) = L-glutamyl-tRNA(Glu) + NADPH + H(+). Its pathway is porphyrin-containing compound metabolism; protoporphyrin-IX biosynthesis; 5-aminolevulinate from L-glutamyl-tRNA(Glu): step 1/2. In terms of biological role, catalyzes the NADPH-dependent reduction of glutamyl-tRNA(Glu) to glutamate 1-semialdehyde (GSA). The polypeptide is Glutamyl-tRNA reductase 1 (Flavobacterium johnsoniae (strain ATCC 17061 / DSM 2064 / JCM 8514 / BCRC 14874 / CCUG 350202 / NBRC 14942 / NCIMB 11054 / UW101) (Cytophaga johnsonae)).